The chain runs to 353 residues: tRNA-cytidine(32) 2-sulfurtransferase (353 aa).

A PP-loop motif motif is present at residues 49-54 (SGGKDS). 3 residues coordinate [4Fe-4S] cluster: Cys124, Cys127, and Cys215.

The protein belongs to the TtcA family. Homodimer. Mg(2+) serves as cofactor. The cofactor is [4Fe-4S] cluster.

It localises to the cytoplasm. It carries out the reaction cytidine(32) in tRNA + S-sulfanyl-L-cysteinyl-[cysteine desulfurase] + AH2 + ATP = 2-thiocytidine(32) in tRNA + L-cysteinyl-[cysteine desulfurase] + A + AMP + diphosphate + H(+). Its pathway is tRNA modification. Catalyzes the ATP-dependent 2-thiolation of cytidine in position 32 of tRNA, to form 2-thiocytidine (s(2)C32). The sulfur atoms are provided by the cysteine/cysteine desulfurase (IscS) system. The chain is tRNA-cytidine(32) 2-sulfurtransferase from Sodalis glossinidius (strain morsitans).